The sequence spans 509 residues: H/ACA ribonucleoprotein complex subunit DKC1 (509 aa).

The tract at residues 1–24 (MADAEVITFPKKHKKKKDRKPLQE) is disordered. Ala-2 bears the N-acetylalanine mark. Residues 2–21 (ADAEVITFPKKHKKKKDRKP) are nucleolar localization. The segment covering 10 to 19 (PKKHKKKKDR) has biased composition (basic residues). Glycyl lysine isopeptide (Lys-Gly) (interchain with G-Cter in SUMO2) cross-links involve residues Lys-20, Lys-39, and Lys-43. The active-site Nucleophile is the Asp-125. Residue Lys-191 forms a Glycyl lysine isopeptide (Lys-Gly) (interchain with G-Cter in SUMO2) linkage. A PUA domain is found at 297-372 (KRLVMKDSAV…VAKIKRVIME (76 aa)). Ser-387 is modified (phosphoserine). Lys-394 participates in a covalent cross-link: Glycyl lysine isopeptide (Lys-Gly) (interchain with G-Cter in SUMO2). Lys-413 participates in a covalent cross-link: Glycyl lysine isopeptide (Lys-Gly) (interchain with G-Cter in SUMO1); alternate. Residue Lys-413 forms a Glycyl lysine isopeptide (Lys-Gly) (interchain with G-Cter in SUMO2); alternate linkage. A Glycyl lysine isopeptide (Lys-Gly) (interchain with G-Cter in SUMO2) cross-link involves residue Lys-424. The interval 446-509 (KRKRDSESES…KVKVVEEMSE (64 aa)) is nuclear and nucleolar localization. Residues 447 to 509 (RKRDSESESD…KVKVVEEMSE (63 aa)) are disordered. Ser-451, Ser-453, and Ser-455 each carry phosphoserine. Phosphothreonine is present on Thr-458. Residues 466–476 (EKKKKKDKKPK) are compositionally biased toward basic residues. Ser-481 carries the phosphoserine modification. At Thr-485 the chain carries Phosphothreonine. A Phosphoserine modification is found at Ser-508.

This sequence belongs to the pseudouridine synthase TruB family. Part of the H/ACA small nucleolar ribonucleoprotein (H/ACA snoRNP) complex, which contains NHP2/NOLA2, GAR1/NOLA1, NOP10/NOLA3, and DKC1/NOLA4, which is presumed to be the catalytic subunit. The complex contains a stable core formed by binding of one or two NOP10-DKC1 heterodimers to NHP2; GAR1 subsequently binds to this core via DKC1. The complex binds a box H/ACA small nucleolar RNA (snoRNA), which may target the specific site of modification within the RNA substrate. During assembly, the complex contains NAF1 instead of GAR1/NOLA1. The complex also interacts with TERC, which contains a 3'-terminal domain related to the box H/ACA snoRNAs. Specific interactions with snoRNAs or TERC are mediated by GAR1 and NHP2. Associates with NOLC1/NOPP140. H/ACA snoRNPs interact with the SMN complex, consisting of SMN1 or SMN2, GEMIN2/SIP1, DDX20/GEMIN3, and GEMIN4. This is mediated by interaction between GAR1 and SMN1 or SMN2. The SMN complex may be required for correct assembly of the H/ACA snoRNP complex. Component of the telomerase holoenzyme complex composed of one molecule of TERT, one molecule of WRAP53/TCAB1, two molecules of H/ACA ribonucleoprotein complex subunits DKC1, NOP10, NHP2 and GAR1, and a telomerase RNA template component (TERC). The telomerase holoenzyme complex is associated with TEP1, SMG6/EST1A and POT1. Interacts with SHQ1; this interaction may lead to the stabilization of DKC1, from the time of its synthesis until its association with NOP10, NHP2, and NAF1 at the nascent H/ACA RNA. Interacts with HMBOX1. Interacts with DHX36. In terms of tissue distribution, ubiquitously expressed, with elevated levels in Purkinje cells, the olfactory bulb, and Leydig cells of the testis.

The protein resides in the nucleus. It localises to the nucleolus. Its subcellular location is the cajal body. The catalysed reaction is uridine in 5S rRNA = pseudouridine in 5S rRNA. Functionally, catalytic subunit of H/ACA small nucleolar ribonucleoprotein (H/ACA snoRNP) complex, which catalyzes pseudouridylation of rRNA. This involves the isomerization of uridine such that the ribose is subsequently attached to C5, instead of the normal N1. Each rRNA can contain up to 100 pseudouridine ('psi') residues, which may serve to stabilize the conformation of rRNAs. Required for ribosome biogenesis and telomere maintenance. Also required for correct processing or intranuclear trafficking of TERC, the RNA component of the telomerase reverse transcriptase (TERT) holoenzyme. In Mus musculus (Mouse), this protein is H/ACA ribonucleoprotein complex subunit DKC1 (Dkc1).